Reading from the N-terminus, the 195-residue chain is 2-cysteine peroxiredoxin, chloroplastic (195 aa).

In terms of domain architecture, Thioredoxin spans 3–161 (IRVGQKAPDF…ALRTLQAIQY (159 aa)). Cysteine 49 acts as the Cysteine sulfenic acid (-SOH) intermediate in catalysis.

The protein belongs to the peroxiredoxin family. AhpC/Prx1 subfamily. As to quaternary structure, homodimer; disulfide-linked, upon oxidation.

The protein resides in the plastid. The protein localises to the chloroplast. It carries out the reaction a hydroperoxide + [thioredoxin]-dithiol = an alcohol + [thioredoxin]-disulfide + H2O. Its function is as follows. Thiol-specific peroxidase that catalyzes the reduction of hydrogen peroxide and organic hydroperoxides to water and alcohols, respectively. Plays a role in cell protection against oxidative stress by detoxifying peroxides. This chain is 2-cysteine peroxiredoxin, chloroplastic, found in Chattonella marina var. antiqua (Red tide flagellate).